The primary structure comprises 161 residues: Allophycocyanin beta chain (161 aa).

At Asn-71 the chain carries N4-methylasparagine. Cys-81 is a binding site for (2R,3E)-phycocyanobilin.

This sequence belongs to the phycobiliprotein family. In terms of assembly, heterodimer of an alpha and a beta chain. In terms of processing, contains one covalently linked phycocyanobilin chromophore.

The protein resides in the cellular thylakoid membrane. Functionally, light-harvesting photosynthetic bile pigment-protein from the phycobiliprotein complex. Allophycocyanin has a maximum absorption at approximately 650 nanometers. The polypeptide is Allophycocyanin beta chain (apcB) (Thermosynechococcus vestitus (strain NIES-2133 / IAM M-273 / BP-1)).